Here is a 509-residue protein sequence, read N- to C-terminus: Citrate synthase 3, peroxisomal (509 aa).

Residues His-319, His-358, and Asp-414 contribute to the active site. Positions 485–509 (SKESDKLGQVATSNASRRRLAGSSV) are disordered. The segment covering 500-509 (SRRRLAGSSV) has biased composition (basic residues).

It belongs to the citrate synthase family. As to expression, widely expressed. Expressed throughout the shoot. Expressed in flower, silique, stem, cauline leaf, young leaf, mature leaf and senescent leaf.

The protein localises to the peroxisome. It catalyses the reaction oxaloacetate + acetyl-CoA + H2O = citrate + CoA + H(+). It functions in the pathway carbohydrate metabolism; tricarboxylic acid cycle; isocitrate from oxaloacetate: step 1/2. Its function is as follows. Peroxisomal citrate synthase required for the fatty acid respiration in seedlings, citrate being exported from peroxisomes into mitochondria during respiration of triacylglycerol (TAG). Indeed, complete respiration requires the transfer of carbon in the form of citrate from the peroxisome to the mitochondria. This Arabidopsis thaliana (Mouse-ear cress) protein is Citrate synthase 3, peroxisomal (CSY3).